Here is a 344-residue protein sequence, read N- to C-terminus: Arginine N-succinyltransferase (344 aa).

L125 provides a ligand contact to succinyl-CoA. H229 serves as the catalytic Proton donor.

Belongs to the arginine N-succinyltransferase family.

It carries out the reaction succinyl-CoA + L-arginine = N(2)-succinyl-L-arginine + CoA + H(+). The protein operates within amino-acid degradation; L-arginine degradation via AST pathway; L-glutamate and succinate from L-arginine: step 1/5. Catalyzes the transfer of succinyl-CoA to arginine to produce N(2)-succinylarginine. The polypeptide is Arginine N-succinyltransferase (Escherichia coli O127:H6 (strain E2348/69 / EPEC)).